Reading from the N-terminus, the 279-residue chain is Probable endonuclease 4 (279 aa).

Positions 69, 109, 145, 179, 182, 216, 229, 231, and 261 each coordinate Zn(2+).

It belongs to the AP endonuclease 2 family. The cofactor is Zn(2+).

The enzyme catalyses Endonucleolytic cleavage to 5'-phosphooligonucleotide end-products.. Its function is as follows. Endonuclease IV plays a role in DNA repair. It cleaves phosphodiester bonds at apurinic or apyrimidinic (AP) sites, generating a 3'-hydroxyl group and a 5'-terminal sugar phosphate. In Desulforapulum autotrophicum (strain ATCC 43914 / DSM 3382 / VKM B-1955 / HRM2) (Desulfobacterium autotrophicum), this protein is Probable endonuclease 4.